The sequence spans 123 residues: Large ribosomal subunit protein uL14 (123 aa).

The protein belongs to the universal ribosomal protein uL14 family. In terms of assembly, part of the 50S ribosomal subunit. Forms a cluster with proteins L3 and L19. In the 70S ribosome, L14 and L19 interact and together make contacts with the 16S rRNA in bridges B5 and B8.

In terms of biological role, binds to 23S rRNA. Forms part of two intersubunit bridges in the 70S ribosome. This is Large ribosomal subunit protein uL14 from Vibrio cholerae serotype O1 (strain ATCC 39541 / Classical Ogawa 395 / O395).